A 286-amino-acid chain; its full sequence is Energy-coupling factor transporter ATP-binding protein EcfA2 (286 aa).

Residues 3 to 246 (IRFDNVSYTY…KEKLADWHIG (244 aa)) form the ABC transporter domain. 40–47 (GQTGSGKS) lines the ATP pocket.

Belongs to the ABC transporter superfamily. Energy-coupling factor EcfA family. Forms a stable energy-coupling factor (ECF) transporter complex composed of 2 membrane-embedded substrate-binding proteins (S component), 2 ATP-binding proteins (A component) and 2 transmembrane proteins (T component).

The protein localises to the cell membrane. Functionally, ATP-binding (A) component of a common energy-coupling factor (ECF) ABC-transporter complex. Unlike classic ABC transporters this ECF transporter provides the energy necessary to transport a number of different substrates. In Staphylococcus aureus (strain MRSA252), this protein is Energy-coupling factor transporter ATP-binding protein EcfA2.